A 644-amino-acid chain; its full sequence is Exoribonuclease 2 (644 aa).

The RNB domain occupies 189–516; that stretch reads REDLTALDFV…NHRLLKAIIK (328 aa). The S1 motif domain maps to 561-643; that stretch reads DSRFAAEIID…ETRSVIARPV (83 aa).

It belongs to the RNR ribonuclease family. RNase II subfamily.

It localises to the cytoplasm. The enzyme catalyses Exonucleolytic cleavage in the 3'- to 5'-direction to yield nucleoside 5'-phosphates.. Functionally, involved in mRNA degradation. Hydrolyzes single-stranded polyribonucleotides processively in the 3' to 5' direction. The protein is Exoribonuclease 2 of Cronobacter sakazakii (strain ATCC BAA-894) (Enterobacter sakazakii).